A 116-amino-acid polypeptide reads, in one-letter code: Aspartate 1-decarboxylase (116 aa).

Ser25 acts as the Schiff-base intermediate with substrate; via pyruvic acid in catalysis. Ser25 is modified (pyruvic acid (Ser)). Residue Thr57 coordinates substrate. The active-site Proton donor is the Tyr58. 73–75 (GAA) serves as a coordination point for substrate.

It belongs to the PanD family. As to quaternary structure, heterooctamer of four alpha and four beta subunits. Pyruvate is required as a cofactor. Is synthesized initially as an inactive proenzyme, which is activated by self-cleavage at a specific serine bond to produce a beta-subunit with a hydroxyl group at its C-terminus and an alpha-subunit with a pyruvoyl group at its N-terminus.

Its subcellular location is the cytoplasm. The enzyme catalyses L-aspartate + H(+) = beta-alanine + CO2. The protein operates within cofactor biosynthesis; (R)-pantothenate biosynthesis; beta-alanine from L-aspartate: step 1/1. Functionally, catalyzes the pyruvoyl-dependent decarboxylation of aspartate to produce beta-alanine. The polypeptide is Aspartate 1-decarboxylase (Fervidobacterium nodosum (strain ATCC 35602 / DSM 5306 / Rt17-B1)).